The primary structure comprises 500 residues: Lysine--tRNA ligase (500 aa).

2 residues coordinate Mg(2+): aspartate 412 and glutamate 419.

Belongs to the class-II aminoacyl-tRNA synthetase family. Homodimer. The cofactor is Mg(2+).

It localises to the cytoplasm. It carries out the reaction tRNA(Lys) + L-lysine + ATP = L-lysyl-tRNA(Lys) + AMP + diphosphate. This Kineococcus radiotolerans (strain ATCC BAA-149 / DSM 14245 / SRS30216) protein is Lysine--tRNA ligase.